The sequence spans 285 residues: Hsp90 co-chaperone Cdc37-like 1 (285 aa).

The disordered stretch occupies residues 34–54; the sequence is LHNSESMDQEQAMAQAELSEL. Residues 35 to 73 are a coiled coil; it reads HNSESMDQEQAMAQAELSELQRSEEEWRRKEAALSQGEN.

The protein belongs to the CDC37 family. As to quaternary structure, forms complexes with Hsp70 and Hsp90.

The protein localises to the cytoplasm. In terms of biological role, co-chaperone that binds to numerous proteins and promotes their interaction with Hsp70 and Hsp90. This Xenopus tropicalis (Western clawed frog) protein is Hsp90 co-chaperone Cdc37-like 1 (cdc37l1).